A 596-amino-acid polypeptide reads, in one-letter code: ATP-dependent lipid A-core flippase (596 aa).

Transmembrane regions (helical) follow at residues 34–54 (VWVL…EAGI), 80–100 (AAVV…GYLL), 138–158 (AVVF…ITLV), 164–184 (VVFL…IVAI), 263–283 (QPLT…IAVV), and 292–312 (VGGF…LKHL). Residues 38–321 (VAGVLAMAAV…LMDVNQPLQR (284 aa)) form the ABC transmembrane type-1 domain. The 237-residue stretch at 353-589 (IEFSHVSFSY…GGLYAHLHRI (237 aa)) folds into the ABC transporter domain. 389–396 (GPSGSGKT) is a binding site for ATP.

The protein belongs to the ABC transporter superfamily. Lipid exporter (TC 3.A.1.106) family. Homodimer.

The protein localises to the cell inner membrane. The enzyme catalyses ATP + H2O + lipid A-core oligosaccharideSide 1 = ADP + phosphate + lipid A-core oligosaccharideSide 2.. Its function is as follows. Involved in lipopolysaccharide (LPS) biosynthesis. Translocates lipid A-core from the inner to the outer leaflet of the inner membrane. Transmembrane domains (TMD) form a pore in the inner membrane and the ATP-binding domain (NBD) is responsible for energy generation. This chain is ATP-dependent lipid A-core flippase, found in Burkholderia thailandensis (strain ATCC 700388 / DSM 13276 / CCUG 48851 / CIP 106301 / E264).